Reading from the N-terminus, the 303-residue chain is Protease HtpX homolog (303 aa).

Helical transmembrane passes span 4 to 24 (VVLF…TARI) and 38 to 58 (MGML…ISLL). His-144 contributes to the Zn(2+) binding site. The active site involves Glu-145. Position 148 (His-148) interacts with Zn(2+). 2 helical membrane-spanning segments follow: residues 152-172 (GDMV…IFLS) and 199-219 (ISSI…VMYF). A Zn(2+)-binding site is contributed by Glu-224.

This sequence belongs to the peptidase M48B family. Requires Zn(2+) as cofactor.

It localises to the cell inner membrane. This is Protease HtpX homolog from Chlorobium phaeobacteroides (strain BS1).